A 233-amino-acid chain; its full sequence is Probable cyclic nucleotide phosphodiesterase COSY_0614 (233 aa).

Positions 10, 12, 48, 78, 144, 183, and 185 each coordinate Fe cation. AMP contacts are provided by residues His-12, Asp-48, and Asn-78–His-79. Residue His-185 participates in AMP binding.

Belongs to the cyclic nucleotide phosphodiesterase class-III family. Fe(2+) serves as cofactor.

The protein is Probable cyclic nucleotide phosphodiesterase COSY_0614 of Vesicomyosocius okutanii subsp. Calyptogena okutanii (strain HA).